The primary structure comprises 1108 residues: Receptor-type guanylate cyclase gcy-20 (1108 aa).

Residues 1-15 form the signal peptide; sequence MRILLLLLQNILVFC. At 16-474 the chain is on the extracellular side; the sequence is QFLQTIKVGL…ECPADFVKEY (459 aa). N-linked (GlcNAc...) asparagine glycosylation is found at N66, N131, N319, N341, N366, and N380. A helical membrane pass occupies residues 475 to 495; the sequence is LVYTIIAAFIVILALLAGCAG. The Protein kinase domain occupies 483–803; sequence FIVILALLAG…IEQVRSHLNG (321 aa). Residues 489 to 497 and K571 each bind ATP; that span reads LLAGCAGLL. The Cytoplasmic segment spans residues 496–1108; the sequence is LLYTMHMKRK…QAGDNNSETV (613 aa). One can recognise a Guanylate cyclase domain in the interval 876-1006; that stretch reads TIFFSDVVQF…DAVNTASRME (131 aa). A disordered region spans residues 1083–1108; sequence LEKNAEGSETSSLSVDQAGDNNSETV. The span at 1089 to 1108 shows a compositional bias: polar residues; it reads GSETSSLSVDQAGDNNSETV.

Belongs to the adenylyl cyclase class-4/guanylyl cyclase family. Expressed asymmetrically in ASE left (ASEL) sensory neuron. Expressed in excretory gland and canal cell.

It is found in the cell membrane. It carries out the reaction GTP = 3',5'-cyclic GMP + diphosphate. Guanylate cyclase involved in the production of the second messenger cGMP. The protein is Receptor-type guanylate cyclase gcy-20 of Caenorhabditis elegans.